The primary structure comprises 203 residues: Pyridoxal 5'-phosphate synthase subunit PdxT (203 aa).

L-glutamine is bound at residue 51–53 (GES). Cys83 serves as the catalytic Nucleophile. Residues Arg110 and 137–138 (IR) contribute to the L-glutamine site. Residues His172 and Glu174 each act as charge relay system in the active site.

Belongs to the glutaminase PdxT/SNO family. In terms of assembly, in the presence of PdxS, forms a dodecamer of heterodimers. Only shows activity in the heterodimer.

It carries out the reaction aldehydo-D-ribose 5-phosphate + D-glyceraldehyde 3-phosphate + L-glutamine = pyridoxal 5'-phosphate + L-glutamate + phosphate + 3 H2O + H(+). The catalysed reaction is L-glutamine + H2O = L-glutamate + NH4(+). Its pathway is cofactor biosynthesis; pyridoxal 5'-phosphate biosynthesis. Catalyzes the hydrolysis of glutamine to glutamate and ammonia as part of the biosynthesis of pyridoxal 5'-phosphate. The resulting ammonia molecule is channeled to the active site of PdxS. The protein is Pyridoxal 5'-phosphate synthase subunit PdxT of Thermoplasma acidophilum (strain ATCC 25905 / DSM 1728 / JCM 9062 / NBRC 15155 / AMRC-C165).